We begin with the raw amino-acid sequence, 306 residues long: Low-density lipoprotein receptor class A domain-containing protein 4 (306 aa).

The Lumenal portion of the chain corresponds to 1–64 (MPEAGFQATN…PPGIFNSELE (64 aa)). One can recognise an LDL-receptor class A domain in the interval 11–48 (AFTECKFTCTSGKCLYLGSLVCNQQNDCGDNSDEENCL). Cystine bridges form between Cys-19–Cys-38 and Cys-32–Cys-47. Residues 65-85 (FAQILIIVVVVTVMVVVVVCL) traverse the membrane as a helical segment. The Cytoplasmic segment spans residues 86 to 306 (LNHYKVSTRS…GKDRKPGDLV (221 aa)). A disordered region spans residues 100 to 127 (PNQSQRQEDGLQPEGSLWPSDSSVQRPG). The PPxY motif 1 motif lies at 180–183 (PPPY). The short motif at 208 to 211 (PPNR) is the SMAD interaction motif (SIM) element. Positions 252–255 (PPTY) match the PPxY motif 2 motif. A disordered region spans residues 268-306 (FHHQHSNTHRGSRPQFQPNNSEGTIVPIKGKDRKPGDLV). Positions 269 to 279 (HHQHSNTHRGS) are enriched in basic residues. Over residues 281-290 (PQFQPNNSEG) the composition is skewed to polar residues. Basic and acidic residues predominate over residues 296 to 306 (KGKDRKPGDLV).

Belongs to the PMEPA1 family. As to quaternary structure, interacts with PMEPA1. Interacts (via the SMAD interaction motif) with SMAD2 and SMAD3. In terms of tissue distribution, detected in all tissues tested.

The protein localises to the early endosome membrane. Its function is as follows. Functions as a negative regulator of TGF-beta signaling and thereby probably plays a role in cell proliferation, differentiation, apoptosis, motility, extracellular matrix production and immunosuppression. In the canonical TGF-beta pathway, ZFYVE9/SARA recruits the intracellular signal transducer and transcriptional modulators SMAD2 and SMAD3 to the TGF-beta receptor. Phosphorylated by the receptor, SMAD2 and SMAD3 then form a heteromeric complex with SMAD4 that translocates to the nucleus to regulate transcription. Through interaction with SMAD2 and SMAD3, LDLRAD4 may compete with ZFYVE9 and SMAD4 and prevent propagation of the intracellular signal. The chain is Low-density lipoprotein receptor class A domain-containing protein 4 (Ldlrad4) from Mus musculus (Mouse).